A 351-amino-acid chain; its full sequence is Peptide chain release factor 1 (351 aa).

Glutamine 233 is subject to N5-methylglutamine.

The protein belongs to the prokaryotic/mitochondrial release factor family. In terms of processing, methylated by PrmC. Methylation increases the termination efficiency of RF1.

The protein resides in the cytoplasm. Peptide chain release factor 1 directs the termination of translation in response to the peptide chain termination codons UAG and UAA. This is Peptide chain release factor 1 from Treponema pallidum subsp. pallidum (strain SS14).